A 359-amino-acid chain; its full sequence is Isopentenyl-diphosphate delta-isomerase (359 aa).

Residue 12 to 13 (RK) participates in substrate binding. Residues S68, 69-71 (AMT), S99, and N128 contribute to the FMN site. 99 to 101 (SQR) is a binding site for substrate. A substrate-binding site is contributed by Q162. A Mg(2+)-binding site is contributed by E163. FMN-binding positions include K194, T224, 277 to 279 (GIR), and 298 to 299 (AL).

It belongs to the IPP isomerase type 2 family. As to quaternary structure, homooctamer. Dimer of tetramers. FMN serves as cofactor. Requires NADPH as cofactor. It depends on Mg(2+) as a cofactor.

It is found in the cytoplasm. The catalysed reaction is isopentenyl diphosphate = dimethylallyl diphosphate. Functionally, involved in the biosynthesis of isoprenoids. Catalyzes the 1,3-allylic rearrangement of the homoallylic substrate isopentenyl (IPP) to its allylic isomer, dimethylallyl diphosphate (DMAPP). The protein is Isopentenyl-diphosphate delta-isomerase of Methanoregula boonei (strain DSM 21154 / JCM 14090 / 6A8).